A 107-amino-acid chain; its full sequence is Polyketide synthase CurG (107 aa).

It participates in antibiotic biosynthesis; curamycin biosynthesis. The polypeptide is Polyketide synthase CurG (curG) (Streptomyces cyaneus (Streptomyces curacoi)).